A 636-amino-acid polypeptide reads, in one-letter code: MDATTTHSRLSEHDIYLFREGSHGRLYDKLGCQLDEAGAHFAVWAPNARAVAVIGSFNAWRDDAAVLRPRDDGSGIWEGFVAGVAAGDVYKYSIVCQDGRVAEKADPFAQYAEVPPATGSRAWRSAHRWADDAWMAGRARANALDAPFSIYELHLGSWRRAQDGALPGYREIAPQLAAYVVEWGFTHVELMPLSEHPFYGSWGYQTTGYFAATARYGTPDDLMFLIDTLHQAGVGVILDWVPSHFPSDAHGLAEFDGTYLYEHADPRQGFHPEWHSCIFNYGRHEVCAFLLSSALFWLERFHIDGLRVDAVASMLYLDYGRQHGEWVPNRYGGRENLDAVAFLRRLNEAVYRDHPGVQTIAEESTAWPMVSRPLYVGGLGFGMKWNMGWMHDSLDYFRHDPLFRKFHHGRITFSIWYAFHENFVLPLSHDEVVYGKGSLIGKMPGDSWQQFAGLRALFGYMWAHPGKKLLFMGGEFGQRREWTHEGELEWWVLDRPEHAGLRHWVGDLNRLYRERAALHELDFDEAGFQWIDSDDSENSVLSFLRKSRNGATVLVICNFTPVTRPNYTLGVPRAGFWREALNSDATLYGGSGAGNLGGVETVPVPAHGHYQSLTLTLPPLAVLFLIPEVDDARPDS.

Asp-309 acts as the Nucleophile in catalysis. Glu-362 serves as the catalytic Proton donor.

It belongs to the glycosyl hydrolase 13 family. GlgB subfamily. In terms of assembly, monomer.

The enzyme catalyses Transfers a segment of a (1-&gt;4)-alpha-D-glucan chain to a primary hydroxy group in a similar glucan chain.. It participates in glycan biosynthesis; glycogen biosynthesis. Functionally, catalyzes the formation of the alpha-1,6-glucosidic linkages in glycogen by scission of a 1,4-alpha-linked oligosaccharide from growing alpha-1,4-glucan chains and the subsequent attachment of the oligosaccharide to the alpha-1,6 position. This Aromatoleum aromaticum (strain DSM 19018 / LMG 30748 / EbN1) (Azoarcus sp. (strain EbN1)) protein is 1,4-alpha-glucan branching enzyme GlgB.